Consider the following 119-residue polypeptide: Large ribosomal subunit protein bL20 (119 aa).

The protein belongs to the bacterial ribosomal protein bL20 family.

Its function is as follows. Binds directly to 23S ribosomal RNA and is necessary for the in vitro assembly process of the 50S ribosomal subunit. It is not involved in the protein synthesizing functions of that subunit. This is Large ribosomal subunit protein bL20 from Anoxybacillus flavithermus (strain DSM 21510 / WK1).